Here is a 410-residue protein sequence, read N- to C-terminus: MGNCGTRDEAAVFTPQAQAQQLQKKHSRSVSDLSDPSTPRFRDDSRTPISYAQVIPFTLFELETITKSFRPDYILGEGGFGTVYKGYIDDNLRVGLKSLPVAVKVLNKEGLQGHREWLTEVNFLGQLRHPNLVKLIGYCCEDDHRLLVYEFMLRGSLENHLFRKTTAPLSWSRRMMIALGAAKGLAFLHNAERPVIYRDFKTSNILLDSDYTAKLSDFGLAKAGPQGDETHVSTRVMGTYGYAAPEYVMTGHLTARSDVYSFGVVLLEMLTGRKSVDKTRPSKEQNLVDWARPKLNDKRKLLQIIDPRLENQYSVRAAQKACSLAYYCLSQNPKARPLMSDVVETLEPLQCTGDALIPCATTTAGAAFAMGGVPDYRMHRRFAKNVGPGAICRSPNPNYSPGGPAACRVR.

The segment covering 1–10 (MGNCGTRDEA) has biased composition (basic and acidic residues). The disordered stretch occupies residues 1-45 (MGNCGTRDEAAVFTPQAQAQQLQKKHSRSVSDLSDPSTPRFRDDS). Residue G2 is the site of N-myristoyl glycine attachment. C4 carries S-palmitoyl cysteine lipidation. A Phosphothreonine modification is found at T58. The Protein kinase domain occupies 69-350 (FRPDYILGEG…DVVETLEPLQ (282 aa)). ATP contacts are provided by residues 75 to 83 (LGEGGFGTV) and K104. Y149 carries the phosphotyrosine modification. D199 (proton acceptor) is an active-site residue. Residues S203 and S233 each carry the phosphoserine modification. 2 positions are modified to phosphothreonine: T234 and T239. A Phosphotyrosine modification is found at Y247.

This sequence belongs to the protein kinase superfamily. Ser/Thr protein kinase family. Interacts with the Xanthomonas campestris effector XopAC/AvrAC.

The protein resides in the cell membrane. It catalyses the reaction L-seryl-[protein] + ATP = O-phospho-L-seryl-[protein] + ADP + H(+). It carries out the reaction L-threonyl-[protein] + ATP = O-phospho-L-threonyl-[protein] + ADP + H(+). Its function is as follows. May be involved in plant defense signaling. This is Probable serine/threonine-protein kinase PBL8 from Arabidopsis thaliana (Mouse-ear cress).